The primary structure comprises 263 residues: Ribosomal RNA small subunit methyltransferase J (263 aa).

S-adenosyl-L-methionine-binding positions include 108–109 (RD), 124–125 (ER), and Asp-178.

Belongs to the methyltransferase superfamily. RsmJ family.

Its subcellular location is the cytoplasm. It carries out the reaction guanosine(1516) in 16S rRNA + S-adenosyl-L-methionine = N(2)-methylguanosine(1516) in 16S rRNA + S-adenosyl-L-homocysteine + H(+). Functionally, specifically methylates the guanosine in position 1516 of 16S rRNA. This Idiomarina loihiensis (strain ATCC BAA-735 / DSM 15497 / L2-TR) protein is Ribosomal RNA small subunit methyltransferase J.